The primary structure comprises 48 residues: MSENRHENEENRRDAAVAKVQNSGNAKVVVSVNTDQDQAQAQSQDGED.

A compositionally biased stretch (basic and acidic residues) spans 1–16 (MSENRHENEENRRDAA). The disordered stretch occupies residues 1–48 (MSENRHENEENRRDAAVAKVQNSGNAKVVVSVNTDQDQAQAQSQDGED). A compositionally biased stretch (low complexity) spans 35–48 (DQDQAQAQSQDGED).

The sequence is that of Small, acid-soluble spore protein G (sspG) from Bacillus subtilis (strain 168).